The sequence spans 104 residues: Large ribosomal subunit protein bL21 (104 aa).

It belongs to the bacterial ribosomal protein bL21 family. In terms of assembly, part of the 50S ribosomal subunit. Contacts protein L20.

Functionally, this protein binds to 23S rRNA in the presence of protein L20. The polypeptide is Large ribosomal subunit protein bL21 (Desulfosudis oleivorans (strain DSM 6200 / JCM 39069 / Hxd3) (Desulfococcus oleovorans)).